Here is a 477-residue protein sequence, read N- to C-terminus: MDFQHRPGGKTGSGGVASSSESNRDRRERLRQLALETIDINKDPYFMKNHLGSYECKLCLTLHNNEGSYLAHTQGKKHQTNLARRAAKEAKEAPAQPAPEKVKVEVKKFVKIGRPGYKVTKQRDTEMGQQSLLFQIDYPEIAEGIMPRHRFMSAYEQRIEPPDRRWQYLLMAAEPYETIAFKVPSREIDKAEGKFWTHWNRETKQFFLQFHFKMEKPPAPPSLPAGPPGVKRPPPPLMNGLPPRPPLPESLPPPPPGGLPLPPMPPSGPAPSGPPGPPQLPPPAPGVHPPAPVVHPPASGVHPPAPGVHPPAPGVHPPAPVVHPPASGVHPPAPGVHPPAPGVHPPAPGVHPPAPGVHPPPSAGVHPQAPVVHPPAPAVHPQAPGVHPTPAVHPQAPGVHPPAPGVHPPAPGIHPQPPGVHPPPPGVHPPAPGVHPQPPGVHPSNPGVHPPTPMPPMLRPPLPSEGPGNIPPPPPTN.

Met-1 bears the N-acetylmethionine mark. The segment at 1 to 27 (MDFQHRPGGKTGSGGVASSSESNRDRR) is disordered. Lys-10 is subject to N6-acetyllysine. A Matrin-type zinc finger spans residues 54 to 84 (YECKLCLTLHNNEGSYLAHTQGKKHQTNLAR). Ser-153 is modified (phosphoserine). Composition is skewed to pro residues over residues 217–295 (PPAP…PVVH), 303–323 (PPAPGVHPPAPGVHPPAPVVH), and 331–362 (PPAPGVHPPAPGVHPPAPGVHPPAPGVHPPPS). Positions 217–477 (PPAPPSLPAG…GNIPPPPPTN (261 aa)) are disordered. Low complexity predominate over residues 379-398 (VHPQAPGVHPTPAVHPQAPG). Composition is skewed to pro residues over residues 399 to 441 (VHPP…PPGV) and 448 to 477 (VHPPTPMPPMLRPPLPSEGPGNIPPPPPTN).

Belongs to the SF3A2 family. In terms of assembly, component of the 17S U2 SnRNP complex, a ribonucleoprotein complex that contains small nuclear RNA (snRNA) U2 and a number of specific proteins. Part of the SF3A subcomplex of the 17S U2 SnRNP complex which is composed of three subunits; SF3A3/SAP61, SF3A2/SAP62 and SF3A1/SAP114. SF3A associates with the splicing factor SF3B and a 12S RNA unit to form the mature 17S U2 small nuclear ribonucleoprotein complex (17S U2 snRNP). Identified in the spliceosome 'E' complex, a precursor of the spliceosome 'A' complex. Identified in the spliceosome 'A' and 'B' complexes. Identified in the spliceosome 'C' complex. Interacts with HTATSF1.

The protein resides in the nucleus. Component of the 17S U2 SnRNP complex of the spliceosome, a large ribonucleoprotein complex that removes introns from transcribed pre-mRNAs. The 17S U2 SnRNP complex (1) directly participates in early spliceosome assembly and (2) mediates recognition of the intron branch site during pre-mRNA splicing by promoting the selection of the pre-mRNA branch-site adenosine, the nucleophile for the first step of splicing. Within the 17S U2 SnRNP complex, SF3A2 is part of the SF3A subcomplex that contributes to the assembly of the 17S U2 snRNP, and the subsequent assembly of the pre-spliceosome 'E' complex and the pre-catalytic spliceosome 'A' complex. Involved in pre-mRNA splicing as a component of pre-catalytic spliceosome 'B' complexes, including the Bact complex. Interacts directly with the duplex formed by U2 snRNA and the intron. In Bos taurus (Bovine), this protein is Splicing factor 3A subunit 2 (SF3A2).